The sequence spans 320 residues: Methionyl-tRNA formyltransferase (320 aa).

(6S)-5,6,7,8-tetrahydrofolate is bound at residue 117–120; that stretch reads SLLP.

The protein belongs to the Fmt family.

It carries out the reaction L-methionyl-tRNA(fMet) + (6R)-10-formyltetrahydrofolate = N-formyl-L-methionyl-tRNA(fMet) + (6S)-5,6,7,8-tetrahydrofolate + H(+). In terms of biological role, attaches a formyl group to the free amino group of methionyl-tRNA(fMet). The formyl group appears to play a dual role in the initiator identity of N-formylmethionyl-tRNA by promoting its recognition by IF2 and preventing the misappropriation of this tRNA by the elongation apparatus. The sequence is that of Methionyl-tRNA formyltransferase from Bordetella petrii (strain ATCC BAA-461 / DSM 12804 / CCUG 43448).